The primary structure comprises 328 residues: Transcription initiation factor IIB 4 (328 aa).

2 stretches are compositionally biased toward basic and acidic residues: residues 1 to 12 (MTNQRTTRDGSH) and 21 to 32 (RSRESTDEDHGC). Residues 1–47 (MTNQRTTRDGSHGTESVPTQRSRESTDEDHGCPECNGDLVTDEDRGE) form a disordered region. Residues 28–58 (EDHGCPECNGDLVTDEDRGETTCGECGLVVE) form a TFIIB-type zinc finger. The Zn(2+) site is built by C32, C35, C50, and C53. 2 repeat units span residues 144 to 227 (GEIE…AREL) and 238 to 319 (SYVP…EILD).

The protein belongs to the TFIIB family.

In terms of biological role, stabilizes TBP binding to an archaeal box-A promoter. Also responsible for recruiting RNA polymerase II to the pre-initiation complex (DNA-TBP-TFIIB). The chain is Transcription initiation factor IIB 4 from Halobacterium salinarum (strain ATCC 700922 / JCM 11081 / NRC-1) (Halobacterium halobium).